A 238-amino-acid polypeptide reads, in one-letter code: MLTTLLPILLLSGWAFCSQDASDGLQRLHMLQISYFRDPYHVWYQGNASLGGHLTHVLEGPDTNTTIIQLQPLQEPESWARTQSGLQSYLLQFHGLVRLVHQERTLAFPLTIRCFLGCELPPEGSRAHVFFEVAVNGSSFVSFRPERALWQADTQVTSGVVTFTLQQLNAYNRTRYELREFLEDTCVQYVQKHISAENTKGSQTSRSYTSLVLGVLVGSFIIAGVAVGIFLCTGGRRC.

Residues 1–17 (MLTTLLPILLLSGWAFC) form the signal peptide. The Extracellular portion of the chain corresponds to 18 to 210 (SQDASDGLQR…GSQTSRSYTS (193 aa)). N-linked (GlcNAc...) asparagine glycosylation is found at Asn47, Asn64, Asn136, and Asn172. Cys118 and Cys186 are oxidised to a cystine. The helical transmembrane segment at 211–231 (LVLGVLVGSFIIAGVAVGIFL) threads the bilayer. Topologically, residues 232–238 (CTGGRRC) are cytoplasmic.

N-glycosylated. In terms of processing, a soluble form exists; probably released by a metalloprotease. Seems to have the same activity as the membrane-bound form. As to expression, expressed strongly in the endothelial cells of arteries and veins in heart and lung, less intensely in capillaries in the lung and skin, and not at all in the endothelium of small vessels of the liver and kidney.

Its subcellular location is the membrane. Functionally, binds activated protein C. Enhances protein C activation by the thrombin-thrombomodulin complex; plays a role in the protein C pathway controlling blood coagulation. In Homo sapiens (Human), this protein is Endothelial protein C receptor (PROCR).